The primary structure comprises 532 residues: Germ cell nuclear acidic-1 protein (532 aa).

A compositionally biased stretch (basic and acidic residues) spans 1–10 (MPTPFRDLHN). Disordered stretches follow at residues 1–50 (MPTP…EPIS), 84–181 (REAP…GNFE), and 213–253 (YISE…DRKQ). The segment covering 14 to 32 (ASASSYETAWSSSFSSRRS) has biased composition (low complexity). Composition is skewed to basic and acidic residues over residues 39–48 (SNLKEIKDEP), 94–107 (LLQK…RDML), and 124–133 (KPKEVKKALK). Acidic residues predominate over residues 213–235 (YISEESSEEESEEEEEDVDDEEY). Positions 236 to 251 (RESSPEVEAKISYSDR) are enriched in basic and acidic residues. A SprT-like domain is found at 308–398 (RRIFSAIPSE…GARCSSVFKS (91 aa)). The interval 468 to 489 (AKPVGPILSNSSKPSPPAPRRI) is disordered.

Belongs to the serine-aspartate repeat-containing protein (SDr) family. In terms of assembly, interacts with top-2; this interaction allows the resolution of topoisomerase II (top-2) DNA-protein cross-links. As to expression, mainly expressed in germ cells and early embryonic, proliferating cells.

The protein resides in the chromosome. Its function is as follows. May play a role in DNA-protein cross-links (DPCs) clearance through a SUMO-dependent recruitment to sites of DPCs, ensuring the genomic stability by protecting germ cells and early embryos from various sources of damage. May resolve the topoisomerase II (top-2) DPCs. Limits replication stress and DNA double-strand breaks. In Caenorhabditis elegans, this protein is Germ cell nuclear acidic-1 protein.